Reading from the N-terminus, the 137-residue chain is Small ribosomal subunit protein uS9c (137 aa).

It belongs to the universal ribosomal protein uS9 family.

It is found in the plastid. It localises to the chloroplast. The chain is Small ribosomal subunit protein uS9c (rps9) from Gracilaria tenuistipitata var. liui (Red alga).